A 276-amino-acid polypeptide reads, in one-letter code: Sec-independent protein translocase protein TatC (276 aa).

The tract at residues 1 to 29 (MVSLTSVPPYADATPDTRASSGPAPGRRK) is disordered. 6 consecutive transmembrane segments (helical) span residues 49-69 (GGLV…LVLL), 103-123 (LFLA…AFVT), 136-156 (GFLG…WWVL), 187-207 (LVLA…LNLA), 221-241 (WAVL…DALT), and 242-262 (MVLV…VAVW).

The protein belongs to the TatC family. The Tat system comprises two distinct complexes: a TatABC complex, containing multiple copies of TatA, TatB and TatC subunits, and a separate TatA complex, containing only TatA subunits. Substrates initially bind to the TatABC complex, which probably triggers association of the separate TatA complex to form the active translocon.

Its subcellular location is the cell membrane. Its function is as follows. Part of the twin-arginine translocation (Tat) system that transports large folded proteins containing a characteristic twin-arginine motif in their signal peptide across membranes. Together with TatB, TatC is part of a receptor directly interacting with Tat signal peptides. This Xylanimonas cellulosilytica (strain DSM 15894 / JCM 12276 / CECT 5975 / KCTC 9989 / LMG 20990 / NBRC 107835 / XIL07) protein is Sec-independent protein translocase protein TatC.